We begin with the raw amino-acid sequence, 141 residues long: Protein C19orf12 homolog (141 aa).

A helical membrane pass occupies residues Ala37–Val57.

Belongs to the C19orf12 family.

It localises to the mitochondrion. Its subcellular location is the mitochondrion membrane. The protein resides in the endoplasmic reticulum. It is found in the cytoplasm. The protein localises to the cytosol. This chain is Protein C19orf12 homolog, found in Bos taurus (Bovine).